We begin with the raw amino-acid sequence, 404 residues long: Glucose-1-phosphate adenylyltransferase (404 aa).

Alpha-D-glucose 1-phosphate-binding positions include Y99, G164, 179–180 (EK), and S197.

Belongs to the bacterial/plant glucose-1-phosphate adenylyltransferase family.

It catalyses the reaction alpha-D-glucose 1-phosphate + ATP + H(+) = ADP-alpha-D-glucose + diphosphate. It functions in the pathway capsule biogenesis; capsule polysaccharide biosynthesis. The protein operates within glycan biosynthesis; glycogen biosynthesis. In terms of biological role, involved in the biosynthesis of ADP-glucose, a building block, required in the biosynthesis of maltose-1-phosphate (M1P) and in the elongation reactions to produce linear alpha-1,4-glucans. Catalyzes the reaction between ATP and alpha-D-glucose 1-phosphate (G1P) to produce pyrophosphate and ADP-Glc. The polypeptide is Glucose-1-phosphate adenylyltransferase (Mycolicibacterium paratuberculosis (strain ATCC BAA-968 / K-10) (Mycobacterium paratuberculosis)).